The chain runs to 317 residues: USG-1 protein homolog (317 aa).

This sequence belongs to the aspartate-semialdehyde dehydrogenase family.

This chain is USG-1 protein homolog (usg), found in Haemophilus influenzae (strain ATCC 51907 / DSM 11121 / KW20 / Rd).